The primary structure comprises 70 residues: Large ribosomal subunit protein eL24 (70 aa).

Cys7, Cys10, Cys33, and Cys37 together coordinate Zn(2+). The C4-type zinc finger occupies Cys7–Cys37.

It belongs to the eukaryotic ribosomal protein eL24 family. Part of the 50S ribosomal subunit. Forms a cluster with proteins L3 and L14. Requires Zn(2+) as cofactor.

In terms of biological role, binds to the 23S rRNA. This Methanocaldococcus jannaschii (strain ATCC 43067 / DSM 2661 / JAL-1 / JCM 10045 / NBRC 100440) (Methanococcus jannaschii) protein is Large ribosomal subunit protein eL24.